Reading from the N-terminus, the 416-residue chain is Histidinol dehydrogenase (416 aa).

Residues tyrosine 117, glutamine 178, and asparagine 201 each contribute to the NAD(+) site. 3 residues coordinate substrate: threonine 224, glutamine 246, and histidine 249. Zn(2+) is bound by residues glutamine 246 and histidine 249. Active-site proton acceptor residues include glutamate 314 and histidine 315. Residues histidine 315, aspartate 348, glutamate 402, and histidine 407 each coordinate substrate. Aspartate 348 lines the Zn(2+) pocket. Zn(2+) is bound at residue histidine 407.

It belongs to the histidinol dehydrogenase family. The cofactor is Zn(2+).

It carries out the reaction L-histidinol + 2 NAD(+) + H2O = L-histidine + 2 NADH + 3 H(+). It participates in amino-acid biosynthesis; L-histidine biosynthesis; L-histidine from 5-phospho-alpha-D-ribose 1-diphosphate: step 9/9. Functionally, catalyzes the sequential NAD-dependent oxidations of L-histidinol to L-histidinaldehyde and then to L-histidine. The polypeptide is Histidinol dehydrogenase (Staphylococcus aureus (strain Mu50 / ATCC 700699)).